A 445-amino-acid chain; its full sequence is Alkylglycerol monooxygenase (445 aa).

Transmembrane regions (helical) follow at residues 43–63 (ATPF…ILKG) and 111–131 (WDSP…YYWF). Residues 120-249 (AFLGVDFGYY…LIIWDKIFGT (130 aa)) form the Fatty acid hydroxylase domain. The Histidine box-1 motif lies at 132-136 (HRMAH). The Histidine box-2 signature appears at 145 to 149 (HQTHH). Residues 221–225 (HRVHH) carry the Histidine box-3 motif. Helical transmembrane passes span 334–354 (LLKI…EETF), 363–383 (VTLL…GFLL), and 413–433 (VPSL…FWGV).

The protein belongs to the sterol desaturase family. TMEM195 subfamily. Requires Fe cation as cofactor.

It localises to the endoplasmic reticulum membrane. It carries out the reaction 1-O-(1,2-saturated-alkyl)-sn-glycerol + (6R)-L-erythro-5,6,7,8-tetrahydrobiopterin + O2 = a 1-(1-hydroxyalkyl)-sn-glycerol + (6R)-L-erythro-6,7-dihydrobiopterin + H2O. Functionally, glyceryl-ether monooxygenase that cleaves the O-alkyl bond of ether lipids. Ether lipids are essential components of brain membranes. The sequence is that of Alkylglycerol monooxygenase (AGMO) from Homo sapiens (Human).